The sequence spans 404 residues: Cysteine desulfurase IscS (404 aa).

Pyridoxal 5'-phosphate is bound by residues 75–76 (AT), Asn-155, Gln-183, and 203–205 (SGH). At Lys-206 the chain carries N6-(pyridoxal phosphate)lysine. Pyridoxal 5'-phosphate is bound at residue Thr-243. The Cysteine persulfide intermediate role is filled by Cys-328. Cys-328 contacts [2Fe-2S] cluster.

The protein belongs to the class-V pyridoxal-phosphate-dependent aminotransferase family. NifS/IscS subfamily. Homodimer. Forms a heterotetramer with IscU, interacts with other sulfur acceptors. Pyridoxal 5'-phosphate serves as cofactor.

The protein resides in the cytoplasm. It catalyses the reaction (sulfur carrier)-H + L-cysteine = (sulfur carrier)-SH + L-alanine. The protein operates within cofactor biosynthesis; iron-sulfur cluster biosynthesis. Its function is as follows. Master enzyme that delivers sulfur to a number of partners involved in Fe-S cluster assembly, tRNA modification or cofactor biosynthesis. Catalyzes the removal of elemental sulfur atoms from cysteine to produce alanine. Functions as a sulfur delivery protein for Fe-S cluster synthesis onto IscU, an Fe-S scaffold assembly protein, as well as other S acceptor proteins. The polypeptide is Cysteine desulfurase IscS (Shewanella putrefaciens (strain CN-32 / ATCC BAA-453)).